Here is a 556-residue protein sequence, read N- to C-terminus: DNA ligase B (556 aa).

Lys122 acts as the N6-AMP-lysine intermediate in catalysis.

The protein belongs to the NAD-dependent DNA ligase family. LigB subfamily.

It carries out the reaction NAD(+) + (deoxyribonucleotide)n-3'-hydroxyl + 5'-phospho-(deoxyribonucleotide)m = (deoxyribonucleotide)n+m + AMP + beta-nicotinamide D-nucleotide.. In terms of biological role, catalyzes the formation of phosphodiester linkages between 5'-phosphoryl and 3'-hydroxyl groups in double-stranded DNA using NAD as a coenzyme and as the energy source for the reaction. This Enterobacter sp. (strain 638) protein is DNA ligase B.